Consider the following 421-residue polypeptide: Cyclin-A2 (421 aa).

M1 carries the post-translational modification N-acetylmethionine. The interval 1–60 is disordered; it reads MPGSSRQSGREAGSALLSLQQEDQENVNPEKAAPDQRARAALKTGNARGNAPQQRLKARR. A Phosphoserine modification is found at S5.

It belongs to the cyclin family. Cyclin AB subfamily. Interacts with the CDK1 and CDK2 protein kinases to form serine/threonine kinase holoenzyme complexes. Interacts with CDK1 (hyperphosphorylated form in G1 and underphosphorylated forms in S and G2). Interacts with CDK2; the interaction increases from G1 to G2. Interacts (associated with CDK2 but not with CDK1) with SCAPER; regulates the activity of CCNA2/CDK2 by transiently maintaining CCNA2 in the cytoplasm. Forms a ternary complex with CDK2 and CDKN1B; CDKN1B inhibits the kinase activity of CDK2 through conformational rearrangements. Interacts with INCA1. Post-translationally, polyubiquitinated via 'Lys-11'-linked ubiquitin by the anaphase-promoting complex (APC/C), leading to its degradation by the proteasome. Deubiquitinated and stabilized by USP37 enables entry into S phase. Ubiquitinated during the G1 phase by the SCF(FBXO31) complex, leading to its proteasomal degradation.

The protein localises to the nucleus. It localises to the cytoplasm. Its function is as follows. Cyclin which controls both the G1/S and the G2/M transition phases of the cell cycle. Functions through the formation of specific serine/threonine kinase holoenzyme complexes with the cyclin-dependent protein kinases CDK1 and CDK2. The cyclin subunit confers the substrate specificity of these complexes and differentially interacts with and activates CDK1 and CDK2 throughout the cell cycle. The protein is Cyclin-A2 of Mesocricetus auratus (Golden hamster).